The primary structure comprises 436 residues: 3-ketoacyl-CoA thiolase (436 aa).

Cys-99 acts as the Acyl-thioester intermediate in catalysis. Residues His-392 and Cys-422 each act as proton acceptor in the active site.

It belongs to the thiolase-like superfamily. Thiolase family. In terms of assembly, heterotetramer of two alpha chains (FadJ) and two beta chains (FadI).

The protein localises to the cytoplasm. It carries out the reaction an acyl-CoA + acetyl-CoA = a 3-oxoacyl-CoA + CoA. It participates in lipid metabolism; fatty acid beta-oxidation. Functionally, catalyzes the final step of fatty acid oxidation in which acetyl-CoA is released and the CoA ester of a fatty acid two carbons shorter is formed. The chain is 3-ketoacyl-CoA thiolase from Shigella flexneri serotype 5b (strain 8401).